A 166-amino-acid polypeptide reads, in one-letter code: Large ribosomal subunit protein uL10 (166 aa).

This sequence belongs to the universal ribosomal protein uL10 family. In terms of assembly, part of the ribosomal stalk of the 50S ribosomal subunit. The N-terminus interacts with L11 and the large rRNA to form the base of the stalk. The C-terminus forms an elongated spine to which L12 dimers bind in a sequential fashion forming a multimeric L10(L12)X complex.

Forms part of the ribosomal stalk, playing a central role in the interaction of the ribosome with GTP-bound translation factors. This Streptococcus uberis (strain ATCC BAA-854 / 0140J) protein is Large ribosomal subunit protein uL10.